The chain runs to 275 residues: Nitrogenase iron protein 1 (275 aa).

Glycine 9–serine 16 serves as a coordination point for ATP. Cysteine 97 serves as a coordination point for [4Fe-4S] cluster. The residue at position 100 (arginine 100) is an ADP-ribosylarginine; by dinitrogenase reductase ADP-ribosyltransferase. [4Fe-4S] cluster is bound at residue cysteine 132.

Belongs to the NifH/BchL/ChlL family. In terms of assembly, homodimer. Requires [4Fe-4S] cluster as cofactor. The reversible ADP-ribosylation of Arg-100 inactivates the nitrogenase reductase and regulates nitrogenase activity.

The enzyme catalyses N2 + 8 reduced [2Fe-2S]-[ferredoxin] + 16 ATP + 16 H2O = H2 + 8 oxidized [2Fe-2S]-[ferredoxin] + 2 NH4(+) + 16 ADP + 16 phosphate + 6 H(+). The key enzymatic reactions in nitrogen fixation are catalyzed by the nitrogenase complex, which has 2 components: the iron protein and the molybdenum-iron protein. The polypeptide is Nitrogenase iron protein 1 (nifH1) (Methanothermobacter marburgensis (strain ATCC BAA-927 / DSM 2133 / JCM 14651 / NBRC 100331 / OCM 82 / Marburg) (Methanobacterium thermoautotrophicum)).